The primary structure comprises 2655 residues: Probable polyketide synthase 42 (2655 aa).

Residues 16–445 (QNGVAVIGVG…GSNCCIILSE (430 aa)) form the Ketosynthase family 3 (KS3) domain. Active-site for beta-ketoacyl synthase activity residues include C186, H325, and H368. Residues 634–667 (GIKSDIMVGHSFGEIACSYCSGMVDFKTLCYLTY) form an acyl/malonyl transferase region. The active-site For acyl/malonyl transferase activity is S644. Residues 926–1059 (HPTWKKANKN…ANYSLFKHND (134 aa)) form an N-terminal hotdog fold region. The region spanning 926–1234 (HPTWKKANKN…CKSSIPIIDS (309 aa)) is the PKS/mFAS DH domain. Catalysis depends on H970, which acts as the Proton acceptor; for dehydratase activity. The segment at 1074–1234 (NYTIISKDEL…CKSSIPIIDS (161 aa)) is C-terminal hotdog fold. The active-site Proton donor; for dehydratase activity is the D1146. The segment at 1700-1719 (YNNNNNNNNNNNNNNNNNNN) is disordered. Residues 2517–2594 (NENNNIGDLL…TTIEIIIKGY (78 aa)) enclose the Carrier domain. S2554 carries the O-(pantetheine 4'-phosphoryl)serine modification. The segment at 2612 to 2655 (SVVQKETIKDNNENKDDIKIDMDDKKENLKGKKENIDDKKENNN) is disordered. Positions 2617 to 2655 (ETIKDNNENKDDIKIDMDDKKENLKGKKENIDDKKENNN) are enriched in basic and acidic residues. Residues 2618–2655 (TIKDNNENKDDIKIDMDDKKENLKGKKENIDDKKENNN) are a coiled coil.

Pantetheine 4'-phosphate serves as cofactor.

Functionally, probable polyketide synthase. In Dictyostelium discoideum (Social amoeba), this protein is Probable polyketide synthase 42 (pks42).